The following is a 357-amino-acid chain: Queuosine-tRNA galactosyltransferase (357 aa).

The protein belongs to the glycosyltransferase 2 family.

The protein resides in the cytoplasm. The catalysed reaction is queuosine(34) in tRNA(Tyr) + UDP-alpha-D-galactose = O-5''-beta-D-galactosylqueuosine(34) in tRNA(Tyr) + UDP + H(+). Functionally, glycosyltransferase that specifically catalyzes galactosylation of cytoplasmic tRNA(Tyr) modified with queuosine at position 34 (queuosine(34)). Galactosylates the cyclopentene hydroxyl group of queuosine(34) in tRNA(Tyr) to form galactosyl-queuosine(34). Mannosylation of queuosine(34) in tRNA(Tyr) is required to slow-down elongation at cognate codons UAC and suppress stop codon readthrough, thereby regulating protein translation. In Mus musculus (Mouse), this protein is Queuosine-tRNA galactosyltransferase.